Consider the following 92-residue polypeptide: C-C motif chemokine 4-like (92 aa).

Residues methionine 1–serine 23 form the signal peptide. 2 disulfides stabilise this stretch: cysteine 34-cysteine 58 and cysteine 35-cysteine 74.

This sequence belongs to the intercrine beta (chemokine CC) family. Interacts with CCR5. As to expression, detected in B-cells.

Its subcellular location is the secreted. Chemokine that induces chemotaxis of cells expressing CCR5 or CCR1. Inhibits HIV replication in peripheral blood monocytes that express CCR5. The sequence is that of C-C motif chemokine 4-like (CCL4L1) from Homo sapiens (Human).